A 182-amino-acid chain; its full sequence is Trypsin inhibitor 2 (182 aa).

A Pyrrolidone carboxylic acid modification is found at glutamine 1. Disulfide bonds link cysteine 40–cysteine 84 and cysteine 136–cysteine 147.

It belongs to the protease inhibitor I3 (leguminous Kunitz-type inhibitor) family.

This chain is Trypsin inhibitor 2, found in Psophocarpus tetragonolobus (Winged bean).